The primary structure comprises 277 residues: Large ribosomal subunit protein uL2 (277 aa).

Residues 199-277 form a disordered region; it reads DHMNTSIGKA…ILLSRHKRKK (79 aa). The span at 209–220 shows a compositional bias: basic residues; that stretch reads GRNRWLGRKPHN.

This sequence belongs to the universal ribosomal protein uL2 family. Part of the 50S ribosomal subunit. Forms a bridge to the 30S subunit in the 70S ribosome.

Its function is as follows. One of the primary rRNA binding proteins. Required for association of the 30S and 50S subunits to form the 70S ribosome, for tRNA binding and peptide bond formation. It has been suggested to have peptidyltransferase activity; this is somewhat controversial. Makes several contacts with the 16S rRNA in the 70S ribosome. This is Large ribosomal subunit protein uL2 from Bradyrhizobium diazoefficiens (strain JCM 10833 / BCRC 13528 / IAM 13628 / NBRC 14792 / USDA 110).